Consider the following 312-residue polypeptide: DNA-directed RNA polymerase subunit alpha (312 aa).

Residues 1-226 (MIEFEKPNIT…EHFKVFMSTD (226 aa)) form an alpha N-terminal domain (alpha-NTD) region. The interval 243–312 (NEKKLEMTIE…DLGLSLRQDD (70 aa)) is alpha C-terminal domain (alpha-CTD).

It belongs to the RNA polymerase alpha chain family. In terms of assembly, homodimer. The RNAP catalytic core consists of 2 alpha, 1 beta, 1 beta' and 1 omega subunit. When a sigma factor is associated with the core the holoenzyme is formed, which can initiate transcription.

The catalysed reaction is RNA(n) + a ribonucleoside 5'-triphosphate = RNA(n+1) + diphosphate. DNA-dependent RNA polymerase catalyzes the transcription of DNA into RNA using the four ribonucleoside triphosphates as substrates. This chain is DNA-directed RNA polymerase subunit alpha, found in Lactobacillus johnsonii (strain CNCM I-12250 / La1 / NCC 533).